Consider the following 130-residue polypeptide: Small ribosomal subunit protein uS11 (130 aa).

The protein belongs to the universal ribosomal protein uS11 family. As to quaternary structure, part of the 30S ribosomal subunit. Interacts with proteins S7 and S18. Binds to IF-3.

Functionally, located on the platform of the 30S subunit, it bridges several disparate RNA helices of the 16S rRNA. Forms part of the Shine-Dalgarno cleft in the 70S ribosome. The protein is Small ribosomal subunit protein uS11 of Ruegeria pomeroyi (strain ATCC 700808 / DSM 15171 / DSS-3) (Silicibacter pomeroyi).